Here is a 297-residue protein sequence, read N- to C-terminus: Bifunctional protein FolD 1 (297 aa).

NADP(+) contacts are provided by residues 174–176 (GRS), S199, and I240.

It belongs to the tetrahydrofolate dehydrogenase/cyclohydrolase family. Homodimer.

It carries out the reaction (6R)-5,10-methylene-5,6,7,8-tetrahydrofolate + NADP(+) = (6R)-5,10-methenyltetrahydrofolate + NADPH. It catalyses the reaction (6R)-5,10-methenyltetrahydrofolate + H2O = (6R)-10-formyltetrahydrofolate + H(+). The protein operates within one-carbon metabolism; tetrahydrofolate interconversion. Catalyzes the oxidation of 5,10-methylenetetrahydrofolate to 5,10-methenyltetrahydrofolate and then the hydrolysis of 5,10-methenyltetrahydrofolate to 10-formyltetrahydrofolate. The protein is Bifunctional protein FolD 1 of Acinetobacter baylyi (strain ATCC 33305 / BD413 / ADP1).